We begin with the raw amino-acid sequence, 702 residues long: Cadmium, zinc and cobalt-transporting ATPase (702 aa).

At 1 to 86 (MRLVKQEYVL…HIKKSADDGY (86 aa)) the chain is on the cytoplasmic side. Residues 4 to 72 (VKQEYVLDGL…KVKSIDPHVT (69 aa)) form the HMA domain. Cys-15 and Cys-18 together coordinate Cd(2+). Co(2+) is bound by residues Cys-15 and Cys-18. 2 residues coordinate Zn(2+): Cys-15 and Cys-18. A helical membrane pass occupies residues 87–107 (RNRMVNMLIRMAAAVILGAAA). At 108 to 116 (YLVQSGTIE) the chain is on the extracellular side. A helical membrane pass occupies residues 117–136 (FFLFLGAYLIIGGDIIIRAV). At 137–143 (KNIIRGQ) the chain is on the cytoplasmic side. A helical membrane pass occupies residues 144-163 (VFDEHFLMALATIGAFLIQQ). The Extracellular portion of the chain corresponds to 164-166 (YPE). The helical transmembrane segment at 167–186 (GVAVMLFYQIGELFQGAAVS) threads the bilayer. Residues 187–320 (RSRKSISALM…ITKFAKYYTP (134 aa)) lie on the Cytoplasmic side of the membrane. Residues 321-339 (AVVIIAVLLAFVPPLVLSG) form a helical membrane-spanning segment. Residues 340–345 (AALSDW) lie on the Extracellular side of the membrane. Residues 346–363 (VYRALIFLVISCPCALVV) traverse the membrane as a helical segment. Over 364–648 (SIPLGFFGGI…AIRIAKRTRR (285 aa)) the chain is Cytoplasmic. Asp-401 acts as the 4-aspartylphosphate intermediate in catalysis. Asp-595 and Asp-599 together coordinate Mg(2+). Residues 649-670 (IVWQNIGFALGVKAIFLILGAF) traverse the membrane as a helical segment. Residues 671 to 678 (GIATMWEA) are Extracellular-facing. The helical transmembrane segment at 679–694 (VFSDVGVTLLAVANAM) threads the bilayer. At 695–702 (RVMRLKNK) the chain is on the cytoplasmic side.

This sequence belongs to the cation transport ATPase (P-type) (TC 3.A.3) family. Type IB subfamily.

The protein localises to the cell membrane. The enzyme catalyses Zn(2+)(in) + ATP + H2O = Zn(2+)(out) + ADP + phosphate + H(+). It catalyses the reaction Cd(2+)(in) + ATP + H2O = Cd(2+)(out) + ADP + phosphate + H(+). Functionally, couples the hydrolysis of ATP with the transport of cadmium, zinc and cobalt out of the cell. Does not seem to transport copper. This chain is Cadmium, zinc and cobalt-transporting ATPase (cadA), found in Bacillus subtilis (strain 168).